The sequence spans 137 residues: uncharacterized protein (137 aa).

Residues 111 to 131 (LAVGVLVGSNLVVGSLVFALL) traverse the membrane as a helical segment.

The protein resides in the membrane. This is an uncharacterized protein from Saccharomyces cerevisiae (strain ATCC 204508 / S288c) (Baker's yeast).